The chain runs to 387 residues: Protein NDRG3 (387 aa).

Residues 329-387 (PSASMTRLVRSRTHSASSSGSMEMPRSRSHTSNAQLQSTSNNSLSNQIQETPHTIELSC) form a disordered region. Over residues 359-377 (TSNAQLQSTSNNSLSNQIQ) the composition is skewed to low complexity.

The protein belongs to the NDRG family.

This Xenopus tropicalis (Western clawed frog) protein is Protein NDRG3.